Reading from the N-terminus, the 62-residue chain is Large ribosomal subunit protein bL28 (62 aa).

Belongs to the bacterial ribosomal protein bL28 family.

This Helicobacter hepaticus (strain ATCC 51449 / 3B1) protein is Large ribosomal subunit protein bL28.